A 555-amino-acid chain; its full sequence is Protein peste (555 aa).

At 1–7 (MTSRTRH) the chain is on the cytoplasmic side. The chain crosses the membrane as a helical span at residues 8 to 28 (CARLGIVLLGICCIASGIYLF). The Extracellular portion of the chain corresponds to 29 to 434 (RNWIDMFTRM…VRVSEEIAAD (406 aa)). N-linked (GlcNAc...) asparagine glycans are attached at residues Asn-70, Asn-110, Asn-129, Asn-213, Asn-242, Asn-312, and Asn-342. Residues 435–455 (IALVPLIVLLGQIVTGILLAG) form a helical membrane-spanning segment. Over 456 to 555 (GLICTCWYPT…SEDSPDVVVR (100 aa)) the chain is Cytoplasmic.

The protein belongs to the CD36 family.

The protein localises to the cell membrane. (Microbial infection) Plays a role in mycobacterial infection. Mediates infection by M.fortuitum and uptake of M.smegmatis. This chain is Protein peste, found in Drosophila melanogaster (Fruit fly).